Here is a 125-residue protein sequence, read N- to C-terminus: Protein ApaG (125 aa).

The ApaG domain maps to 1–125 (MADSPRVCVQ…FRLAVPTLIH (125 aa)).

In Cronobacter sakazakii (strain ATCC BAA-894) (Enterobacter sakazakii), this protein is Protein ApaG.